A 173-amino-acid chain; its full sequence is Peptide methionine sulfoxide reductase MsrA (173 aa).

The active site involves cysteine 10.

The protein belongs to the MsrA Met sulfoxide reductase family.

It carries out the reaction L-methionyl-[protein] + [thioredoxin]-disulfide + H2O = L-methionyl-(S)-S-oxide-[protein] + [thioredoxin]-dithiol. The catalysed reaction is [thioredoxin]-disulfide + L-methionine + H2O = L-methionine (S)-S-oxide + [thioredoxin]-dithiol. In terms of biological role, has an important function as a repair enzyme for proteins that have been inactivated by oxidation. Catalyzes the reversible oxidation-reduction of methionine sulfoxide in proteins to methionine. In Psychrobacter arcticus (strain DSM 17307 / VKM B-2377 / 273-4), this protein is Peptide methionine sulfoxide reductase MsrA.